A 551-amino-acid chain; its full sequence is Cilia- and flagella-associated protein 45 (551 aa).

Disordered regions lie at residues 1 to 52, 232 to 256, and 385 to 415; these read MPLR…KSDS, MEIDRRESLQRQEDRERKRREERVR, and EQDALRAKRNQEVADREWRRKEKENAQKKIE. The span at 8–18 shows a compositional bias: low complexity; the sequence is ASSSASTASNR. A coiled-coil region spans residues 276-524; sequence AEHREQEKEQ…EDIKKQKLEE (249 aa). Positions 387–415 are enriched in basic and acidic residues; the sequence is DALRAKRNQEVADREWRRKEKENAQKKIE.

The protein belongs to the CFAP45 family. Microtubule inner protein component of sperm flagellar doublet microtubules. Interacts with AK8; dimerization with AK8 may create a cavity at the interface of the dimer that can accommodate AMP. Interacts with CFAP52. Interacts with ENKUR. Directly interacts with DNALI1. Interacts with DNAH11. Interacts with DNAI1. Expressed in respiratory cells and in sperm (at protein level).

Its subcellular location is the cytoplasm. The protein localises to the cytoskeleton. It is found in the cilium axoneme. The protein resides in the flagellum axoneme. It localises to the cell projection. Its subcellular location is the cilium. The protein localises to the flagellum. Functionally, microtubule inner protein (MIP) part of the dynein-decorated doublet microtubules (DMTs) in cilia axoneme, which is required for motile cilia beating. It is an AMP-binding protein that may facilitate dynein ATPase-dependent ciliary and flagellar beating via adenine nucleotide homeostasis. May function as a donor of AMP to AK8 and hence promote ADP production. This chain is Cilia- and flagella-associated protein 45 (Cfap45), found in Mus musculus (Mouse).